An 88-amino-acid polypeptide reads, in one-letter code: C-C motif chemokine 18 (88 aa).

Residues 1–19 (MKGLAAALLVLCTVALCSC) form the signal peptide. Cystine bridges form between cysteine 29/cysteine 53 and cysteine 30/cysteine 69.

It belongs to the intercrine beta (chemokine CC) family. In terms of processing, the Cys-29/Cys-53 disulfide bond is required for activity.

The protein localises to the secreted. Its function is as follows. Chemotactic factor that attracts lymphocytes but not monocytes or granulocytes. May be involved in B-cell migration into B-cell follicles in lymph nodes. Attracts naive T-lymphocytes toward dendritic cells and activated macrophages in lymph nodes, has chemotactic activity for naive T-cells, CD4+ and CD8+ T-cells and thus may play a role in both humoral and cell-mediated immunity responses. This chain is C-C motif chemokine 18 (CCL18), found in Macaca mulatta (Rhesus macaque).